A 156-amino-acid polypeptide reads, in one-letter code: Small ribosomal subunit protein uS7 (156 aa).

The protein belongs to the universal ribosomal protein uS7 family. Part of the 30S ribosomal subunit. Contacts proteins S9 and S11.

Functionally, one of the primary rRNA binding proteins, it binds directly to 16S rRNA where it nucleates assembly of the head domain of the 30S subunit. Is located at the subunit interface close to the decoding center, probably blocks exit of the E-site tRNA. In Buchnera aphidicola subsp. Acyrthosiphon pisum (strain Tuc7), this protein is Small ribosomal subunit protein uS7.